The chain runs to 91 residues: Late embryogenesis abundant protein EMB564 (91 aa).

Basic and acidic residues-rich tracts occupy residues 1 to 19 (MASG…REGE) and 32 to 51 (EAQE…RREQ). Positions 1 to 91 (MASGQESRKE…VTIDESKFTK (91 aa)) are disordered.

Belongs to the small hydrophilic plant seed protein family.

In terms of biological role, LEA proteins are late embryonic proteins abundant in higher plant seed embryos. They may play an essential role in seed survival and in controlling water exchanges during seed desiccation and imbibition. In Zea mays (Maize), this protein is Late embryogenesis abundant protein EMB564.